A 180-amino-acid polypeptide reads, in one-letter code: Bifunctional protein PyrR (180 aa).

Residues 101–113 carry the PRPP-binding motif; the sequence is VVLVDDVIFKGRT.

This sequence belongs to the purine/pyrimidine phosphoribosyltransferase family. PyrR subfamily.

It catalyses the reaction UMP + diphosphate = 5-phospho-alpha-D-ribose 1-diphosphate + uracil. In terms of biological role, regulates the transcription of the pyrimidine nucleotide (pyr) operon in response to exogenous pyrimidines. Functionally, also displays a weak uracil phosphoribosyltransferase activity which is not physiologically significant. This is Bifunctional protein PyrR from Trichormus variabilis (strain ATCC 29413 / PCC 7937) (Anabaena variabilis).